Here is a 230-residue protein sequence, read N- to C-terminus: ATP-dependent dethiobiotin synthetase BioD (230 aa).

Asp12–His17 is a binding site for ATP. Mg(2+) is bound at residue Thr16. Lys37 is a catalytic residue. Position 41 (Ser41) interacts with substrate. Residues Asp52, Glu115–Gly118, and Ser175–Glu176 contribute to the ATP site. Mg(2+)-binding residues include Asp52 and Glu115.

The protein belongs to the dethiobiotin synthetase family. In terms of assembly, homodimer. Requires Mg(2+) as cofactor.

The protein resides in the cytoplasm. The catalysed reaction is (7R,8S)-7,8-diammoniononanoate + CO2 + ATP = (4R,5S)-dethiobiotin + ADP + phosphate + 3 H(+). It participates in cofactor biosynthesis; biotin biosynthesis; biotin from 7,8-diaminononanoate: step 1/2. Catalyzes a mechanistically unusual reaction, the ATP-dependent insertion of CO2 between the N7 and N8 nitrogen atoms of 7,8-diaminopelargonic acid (DAPA, also called 7,8-diammoniononanoate) to form a ureido ring. This is ATP-dependent dethiobiotin synthetase BioD from Caulobacter sp. (strain K31).